The sequence spans 267 residues: Rhomboid-type serine protease 2 (267 aa).

Transmembrane regions (helical) follow at residues 20-40 (LPLF…ASLQ), 67-87 (FPLI…LTPL), 99-119 (TSLA…YVLI), 126-146 (ANHG…MESI), 155-179 (FVIG…AALI), and 185-206 (LGHL…KLLA). Serine 134 serves as the catalytic Nucleophile. Histidine 187 is an active-site residue. The disordered stretch occupies residues 247–267 (RPGPSGSAATELVGTTQRLGP).

Belongs to the peptidase S54 family.

It is found in the golgi apparatus membrane. Its subcellular location is the golgi apparatus. The protein resides in the cis-Golgi network membrane. The catalysed reaction is Cleaves type-1 transmembrane domains using a catalytic dyad composed of serine and histidine that are contributed by different transmembrane domains.. Its function is as follows. Probable rhomboid-type serine protease that catalyzes intramembrane proteolysis. This Gibberella zeae (strain ATCC MYA-4620 / CBS 123657 / FGSC 9075 / NRRL 31084 / PH-1) (Wheat head blight fungus) protein is Rhomboid-type serine protease 2 (RBD2).